A 248-amino-acid chain; its full sequence is PACRG-like protein (248 aa).

Methionine 1 is modified (N-acetylmethionine). Positions 1–72 are disordered; the sequence is MQRSECSGGV…NPKTINPFGE (72 aa). 2 stretches are compositionally biased toward polar residues: residues 14–29 and 36–45; these read NRATGSNDQRTSSSTQ and VQRSKSSSLT. Serine 47 bears the Phosphoserine mark.

The chain is PACRG-like protein (Pacrgl) from Mus musculus (Mouse).